We begin with the raw amino-acid sequence, 549 residues long: Oxygen-dependent choline dehydrogenase (549 aa).

4 to 33 contacts FAD; sequence DYIIIGSGSAGSALAHRLSEDSRNSVIVLE. H465 functions as the Proton acceptor in the catalytic mechanism.

The protein belongs to the GMC oxidoreductase family. Requires FAD as cofactor.

It catalyses the reaction choline + A = betaine aldehyde + AH2. The catalysed reaction is betaine aldehyde + NAD(+) + H2O = glycine betaine + NADH + 2 H(+). The protein operates within amine and polyamine biosynthesis; betaine biosynthesis via choline pathway; betaine aldehyde from choline (cytochrome c reductase route): step 1/1. Its function is as follows. Involved in the biosynthesis of the osmoprotectant glycine betaine. Catalyzes the oxidation of choline to betaine aldehyde and betaine aldehyde to glycine betaine at the same rate. The sequence is that of Oxygen-dependent choline dehydrogenase from Sinorhizobium fredii (strain NBRC 101917 / NGR234).